A 58-amino-acid chain; its full sequence is uncharacterized protein (58 aa).

A helical membrane pass occupies residues 5-27 (FLHANITIIPHSVLYVSLSYYII).

Its subcellular location is the membrane. This is an uncharacterized protein from Saccharomyces cerevisiae (strain ATCC 204508 / S288c) (Baker's yeast).